The sequence spans 147 residues: MRTYTPKPGDINRQWHVIDATDVVLGRLASQTATLLRGKHKPTFAPHMDMGDFVIIINAEKVALTGAKLEQKRAYRHSGYPGGLSSVNYAELLEKNPVRAVEKAIKGMLPKTSLAAQQLSKLKVYRGAEHPHAAQQPKTFEITQVAQ.

It belongs to the universal ribosomal protein uL13 family. As to quaternary structure, part of the 50S ribosomal subunit.

This protein is one of the early assembly proteins of the 50S ribosomal subunit, although it is not seen to bind rRNA by itself. It is important during the early stages of 50S assembly. The protein is Large ribosomal subunit protein uL13 of Renibacterium salmoninarum (strain ATCC 33209 / DSM 20767 / JCM 11484 / NBRC 15589 / NCIMB 2235).